The following is a 139-amino-acid chain: FLYWCH family member 2 (139 aa).

Disordered regions lie at residues 1–36 (MPQP…PRKP) and 86–139 (EAQR…STSP). A compositionally biased stretch (basic and acidic residues) spans 98–107 (PEQKRSKQNL). Over residues 120–130 (VSSSSSEETTV) the composition is skewed to low complexity.

This chain is FLYWCH family member 2 (Flywch2), found in Mus musculus (Mouse).